We begin with the raw amino-acid sequence, 171 residues long: Flavodoxin (171 aa).

Residues 4–165 (IGIFFGSDTG…RIKQWVKQII (162 aa)) form the Flavodoxin-like domain.

The protein belongs to the flavodoxin family. The cofactor is FMN.

Its function is as follows. Low-potential electron donor to a number of redox enzymes. The polypeptide is Flavodoxin (fldA) (Buchnera aphidicola subsp. Acyrthosiphon pisum (strain APS) (Acyrthosiphon pisum symbiotic bacterium)).